Consider the following 322-residue polypeptide: Hapalindole dimethylallyltransferase (322 aa).

Residues Arg46, Arg60, Lys115, Asn166, Tyr168, Arg221, Tyr225, and Lys275 each contribute to the dimethylallyl diphosphate site.

This sequence belongs to the aromatic prenyltransferase family.

It catalyses the reaction hapalindole G + dimethylallyl diphosphate = ambiguine A + diphosphate. It carries out the reaction hapalindole U + dimethylallyl diphosphate + H(+) = ambiguine H + diphosphate. Activity is slightly increased in the presence of Mg(2+). In terms of biological role, prenyltransferase involved in the biosynthesis of ambiguines, a family of hapalindole-type alkaloids. Catalyzes the reverse prenylation of hapalindole G or U at the C2 position with dimethylallyl diphosphate (DMAPP) to generate ambiguine A or H, respectively. In addition, accepts hapalindole A, an epimer of hapalindole G, and catalyzes normal prenylation at its C2 position. The polypeptide is Hapalindole dimethylallyltransferase (Fischerella ambigua (strain UTEX 1903)).